The sequence spans 130 residues: DNA-directed RNA polymerase subunit omega (130 aa).

Residues Glu-110–Glu-130 are disordered.

This sequence belongs to the RNA polymerase subunit omega family. As to quaternary structure, the RNAP catalytic core consists of 2 alpha, 1 beta, 1 beta' and 1 omega subunit. When a sigma factor is associated with the core the holoenzyme is formed, which can initiate transcription.

The enzyme catalyses RNA(n) + a ribonucleoside 5'-triphosphate = RNA(n+1) + diphosphate. Functionally, promotes RNA polymerase assembly. Latches the N- and C-terminal regions of the beta' subunit thereby facilitating its interaction with the beta and alpha subunits. This chain is DNA-directed RNA polymerase subunit omega, found in Rhodopseudomonas palustris (strain HaA2).